A 415-amino-acid chain; its full sequence is Serine hydroxymethyltransferase (415 aa).

(6S)-5,6,7,8-tetrahydrofolate-binding positions include L117 and 121-123; that span reads GHL. K226 carries the N6-(pyridoxal phosphate)lysine modification. Residues E241 and 349–351 contribute to the (6S)-5,6,7,8-tetrahydrofolate site; that span reads SPF.

It belongs to the SHMT family. Homodimer. Pyridoxal 5'-phosphate is required as a cofactor.

It localises to the cytoplasm. The catalysed reaction is (6R)-5,10-methylene-5,6,7,8-tetrahydrofolate + glycine + H2O = (6S)-5,6,7,8-tetrahydrofolate + L-serine. It participates in one-carbon metabolism; tetrahydrofolate interconversion. Its pathway is amino-acid biosynthesis; glycine biosynthesis; glycine from L-serine: step 1/1. Its function is as follows. Catalyzes the reversible interconversion of serine and glycine with tetrahydrofolate (THF) serving as the one-carbon carrier. This reaction serves as the major source of one-carbon groups required for the biosynthesis of purines, thymidylate, methionine, and other important biomolecules. Also exhibits THF-independent aldolase activity toward beta-hydroxyamino acids, producing glycine and aldehydes, via a retro-aldol mechanism. The chain is Serine hydroxymethyltransferase from Geobacter sulfurreducens (strain ATCC 51573 / DSM 12127 / PCA).